The following is a 300-amino-acid chain: U1 small nuclear ribonucleoprotein 70 kDa homolog (300 aa).

One can recognise an RRM domain in the interval 107 to 198; sequence RTIFIGRLPY…RTVKYFKPRR (92 aa). Disordered stretches follow at residues 204-248 and 263-300; these read GGRG…AYSA and NRPL…APDY. Residues 265 to 279 are compositionally biased toward low complexity; it reads PLLSAATPTAAVTSV.

In terms of assembly, component of the spliceosome, where it is associated with snRNP U1. Binds stem loop I of U1 snRNA. Interacts with mRNA.

The protein resides in the nucleus. In terms of biological role, involved in nuclear mRNA splicing. The sequence is that of U1 small nuclear ribonucleoprotein 70 kDa homolog (SNP1) from Saccharomyces cerevisiae (strain ATCC 204508 / S288c) (Baker's yeast).